A 190-amino-acid polypeptide reads, in one-letter code: Elongation factor P (190 aa).

Lys-34 bears the N6-(3,6-diaminohexanoyl)-5-hydroxylysine mark.

Belongs to the elongation factor P family. May be beta-lysylated on the epsilon-amino group of Lys-34 by the combined action of EpmA and EpmB, and then hydroxylated on the C5 position of the same residue by EpmC (if this protein is present). Lysylation is critical for the stimulatory effect of EF-P on peptide-bond formation. The lysylation moiety may extend toward the peptidyltransferase center and stabilize the terminal 3-CCA end of the tRNA. Hydroxylation of the C5 position on Lys-34 may allow additional potential stabilizing hydrogen-bond interactions with the P-tRNA.

It localises to the cytoplasm. The protein operates within protein biosynthesis; polypeptide chain elongation. Functionally, involved in peptide bond synthesis. Alleviates ribosome stalling that occurs when 3 or more consecutive Pro residues or the sequence PPG is present in a protein, possibly by augmenting the peptidyl transferase activity of the ribosome. Modification of Lys-34 is required for alleviation. This is Elongation factor P from Psychrobacter cryohalolentis (strain ATCC BAA-1226 / DSM 17306 / VKM B-2378 / K5).